The primary structure comprises 220 residues: Protein DGCR6L (220 aa).

Residues 76–159 (KSLYNQRLRL…ADQQSTLEKA (84 aa)) adopt a coiled-coil conformation.

It belongs to the gonadal family. Widely expressed in fetal and adult tissues. Highest expression in liver, heart and skeletal muscle. Lower levels in pancreas and placenta. Weak expression in brain.

The protein localises to the nucleus. May play a role in neural crest cell migration into the third and fourth pharyngeal pouches. This Homo sapiens (Human) protein is Protein DGCR6L (DGCR6L).